Here is a 418-residue protein sequence, read N- to C-terminus: Glutamyl-tRNA reductase (418 aa).

Substrate contacts are provided by residues 49–52 (TCNR), Ser-109, 114–116 (EPQ), and Gln-120. Cys-50 serves as the catalytic Nucleophile. Residue 189–194 (GAGETI) participates in NADP(+) binding.

Belongs to the glutamyl-tRNA reductase family. As to quaternary structure, homodimer.

The catalysed reaction is (S)-4-amino-5-oxopentanoate + tRNA(Glu) + NADP(+) = L-glutamyl-tRNA(Glu) + NADPH + H(+). Its pathway is porphyrin-containing compound metabolism; protoporphyrin-IX biosynthesis; 5-aminolevulinate from L-glutamyl-tRNA(Glu): step 1/2. Functionally, catalyzes the NADPH-dependent reduction of glutamyl-tRNA(Glu) to glutamate 1-semialdehyde (GSA). The chain is Glutamyl-tRNA reductase from Escherichia coli O127:H6 (strain E2348/69 / EPEC).